The primary structure comprises 416 residues: S-layer protein B (416 aa).

The N-terminal stretch at 1-20 (MKYNLLPLILLSLLVAPLLA) is a signal peptide. Residues 310–330 (IASLNSTIQSLESQISSLSST) are a coiled coil. A helical transmembrane segment spans residues 392–412 (IALAVSIIAIIISIVVLILVF).

Belongs to the Sulfolobales SlaB family. In terms of assembly, the mushroom-shaped unit cells of the Sulfolobales' S-layers may consist of three SlaB subunits and six SlaA subunits.

Its subcellular location is the secreted. The protein localises to the cell wall. It localises to the S-layer. It is found in the cell membrane. Its function is as follows. S-layer small protein. May anchor the complex to the cell membrane. In Metallosphaera sedula (strain ATCC 51363 / DSM 5348 / JCM 9185 / NBRC 15509 / TH2), this protein is S-layer protein B.